A 217-amino-acid polypeptide reads, in one-letter code: tRNA (guanine-N(7)-)-methyltransferase (217 aa).

S-adenosyl-L-methionine-binding residues include Glu48, Glu73, Asn100, and Asp123. Asp123 is a catalytic residue. Residues Lys127 and Asp159 each contribute to the substrate site.

The protein belongs to the class I-like SAM-binding methyltransferase superfamily. TrmB family.

The catalysed reaction is guanosine(46) in tRNA + S-adenosyl-L-methionine = N(7)-methylguanosine(46) in tRNA + S-adenosyl-L-homocysteine. Its pathway is tRNA modification; N(7)-methylguanine-tRNA biosynthesis. Catalyzes the formation of N(7)-methylguanine at position 46 (m7G46) in tRNA. The sequence is that of tRNA (guanine-N(7)-)-methyltransferase from Leptospira interrogans serogroup Icterohaemorrhagiae serovar Lai (strain 56601).